Reading from the N-terminus, the 273-residue chain is Dermonecrotic toxin LhSicTox-alphaIA1ii (273 aa).

The active site involves His-5. Residues Glu-25 and Asp-27 each contribute to the Mg(2+) site. His-41 (nucleophile) is an active-site residue. Cystine bridges form between Cys-45–Cys-51 and Cys-47–Cys-190. Asp-85 provides a ligand contact to Mg(2+).

It belongs to the arthropod phospholipase D family. Class II subfamily. It depends on Mg(2+) as a cofactor. Expressed by the venom gland.

Its subcellular location is the secreted. The enzyme catalyses an N-(acyl)-sphingosylphosphocholine = an N-(acyl)-sphingosyl-1,3-cyclic phosphate + choline. It catalyses the reaction an N-(acyl)-sphingosylphosphoethanolamine = an N-(acyl)-sphingosyl-1,3-cyclic phosphate + ethanolamine. It carries out the reaction a 1-acyl-sn-glycero-3-phosphocholine = a 1-acyl-sn-glycero-2,3-cyclic phosphate + choline. The catalysed reaction is a 1-acyl-sn-glycero-3-phosphoethanolamine = a 1-acyl-sn-glycero-2,3-cyclic phosphate + ethanolamine. Functionally, dermonecrotic toxins cleave the phosphodiester linkage between the phosphate and headgroup of certain phospholipids (sphingolipid and lysolipid substrates), forming an alcohol (often choline) and a cyclic phosphate. This toxin acts on sphingomyelin (SM). It may also act on ceramide phosphoethanolamine (CPE), lysophosphatidylcholine (LPC) and lysophosphatidylethanolamine (LPE), but not on lysophosphatidylserine (LPS), and lysophosphatidylglycerol (LPG). It acts by transphosphatidylation, releasing exclusively cyclic phosphate products as second products. Induces dermonecrosis, hemolysis, increased vascular permeability, edema, inflammatory response, and platelet aggregation. This is Dermonecrotic toxin LhSicTox-alphaIA1ii from Loxosceles hirsuta (Recluse spider).